The primary structure comprises 176 residues: MKWRSTTVVCVRRNDSVVMISDGQVTYGNTILKGNAKKVRKMGDGNVLAGFAGSVADAMALFDRFEAKYREWGGNLLKAAVELAKDWRTDRVLRRLEAMLLVADKKYTFIVSGTGEVIQPEDDIASIGSGSPYAIAAGKALLRHTDLSAKEIALEAIKIASEICIYTNDNFTIEEL.

Threonine 6 is an active-site residue. Positions 161, 164, and 167 each coordinate Na(+).

It belongs to the peptidase T1B family. HslV subfamily. A double ring-shaped homohexamer of HslV is capped on each side by a ring-shaped HslU homohexamer. The assembly of the HslU/HslV complex is dependent on binding of ATP.

It localises to the cytoplasm. The catalysed reaction is ATP-dependent cleavage of peptide bonds with broad specificity.. Allosterically activated by HslU binding. Protease subunit of a proteasome-like degradation complex believed to be a general protein degrading machinery. This chain is ATP-dependent protease subunit HslV, found in Thermosipho africanus (strain TCF52B).